The primary structure comprises 463 residues: Interferon-inducible GTPase 5 (463 aa).

One can recognise an IRG-type G domain in the interval 52 to 234; that stretch reads TRLEVGVTGE…PMLVTTWEHD (183 aa). GTP is bound by residues 61-68, 86-90, 168-170, and 215-217; these read ESGAGKSS, TGVVE, KVD, and SNL. Residues S246 and S303 each carry the phosphoserine modification. A disordered region spans residues 409–438; sequence QGEVSLEAAGDNAVEKRSSGEGTSEEAPLS.

The protein belongs to the TRAFAC class dynamin-like GTPase superfamily. IRG family.

The protein resides in the cell projection. It localises to the cilium. It is found in the flagellum. The protein localises to the lipid droplet. It carries out the reaction GTP + H2O = GDP + phosphate + H(+). Its function is as follows. Required for sperm motility and therefore male fertility, via positive regulation of spermatozoa fibrous sheath formation. In Rattus norvegicus (Rat), this protein is Interferon-inducible GTPase 5 (Irgc).